A 299-amino-acid polypeptide reads, in one-letter code: Craniofacial development protein 1 (299 aa).

2 stretches are compositionally biased toward acidic residues: residues 1-18 (MEEFDSEDFSTSEEDEDY) and 25-43 (YSEDDVNELVKEDEVDGEE). 2 disordered regions span residues 1-156 (MEEF…ELEK) and 192-224 (FFKQNEKEKPQANVPSALPSLPAGSGLKRSSGM). Basic residues predominate over residues 49 to 65 (QGKKRKAQSIPARKRRQ). Residues 70-94 (LEEEEEEDANSESEGSSSEEEDDAA) are compositionally biased toward acidic residues. Phosphoserine occurs at positions 82, 85, and 86. Residues 95–112 (EQEKGIGSEDARKKKEDE) are compositionally biased toward basic and acidic residues. Ser116 is modified (phosphoserine). Residue Lys150 forms a Glycyl lysine isopeptide (Lys-Gly) (interchain with G-Cter in SUMO2) linkage. The interval 178-217 (VTKEVDATSKEAKSFFKQNEKEKPQANVPSALPSLPAGSG) is hydrophilic. The span at 192 to 201 (FFKQNEKEKP) shows a compositional bias: basic and acidic residues. Ser216 carries the post-translational modification Phosphoserine. The BCNT-C domain occupies 218 to 299 (LKRSSGMSSL…RDLRLSKMKP (82 aa)). Lys219 carries the post-translational modification N6-methyllysine. At Ser250 the chain carries Phosphoserine.

In terms of processing, phosphorylated by CK2 (casein kinase II) in vitro. Ubiquitous.

It is found in the chromosome. It localises to the centromere. Its subcellular location is the kinetochore. Functionally, may play a role during embryogenesis. The sequence is that of Craniofacial development protein 1 (CFDP1) from Homo sapiens (Human).